Consider the following 426-residue polypeptide: MLDAKYIKDNLQQVAEKLATRGYQFDIAEFEAQEQKRKHLQERTQDLQSQRNTISKEIGQKKAKGEDTSDIFAKVNQINEELKIIEKELKDLQDTINQTLLSMPNLPADDVPVGKDENDNVEIRRWGTPREFHPEAPAKDHSDIGEILKMIDFKAAAKVTGSRFMVLKNKIAKLHRALSQFMLDLHTEKHGYEELYVPYLVNNDSLYGTGQLPKFAADLFKLEGDFEYSLIPTAEVPITNLVRDEILDTETLPRYYTAHTPCFRSEAGSYGRDTKGMIRQHQFEKVELVHITTADKGEESLELLTSHAEKVLQKLNLPYRVMKLCTGDMGFSAKKTYDLEVWLPSQNTYREISSCSWCGDFQARRMKARHKNPSMKKPELVHTLNGSGLAVGRTLLAIIENYQQEDGSIMVPDALIKYMGGISVIK.

The disordered stretch occupies residues 36–66; the sequence is KRKHLQERTQDLQSQRNTISKEIGQKKAKGE. The span at 46-55 shows a compositional bias: polar residues; sequence DLQSQRNTIS. Position 233 to 235 (233 to 235) interacts with L-serine; the sequence is TAE. 264 to 266 is an ATP binding site; the sequence is RSE. Glu287 contacts L-serine. 351–354 contacts ATP; sequence EISS. An L-serine-binding site is contributed by Ser387.

This sequence belongs to the class-II aminoacyl-tRNA synthetase family. Type-1 seryl-tRNA synthetase subfamily. Homodimer. The tRNA molecule binds across the dimer.

The protein localises to the cytoplasm. The enzyme catalyses tRNA(Ser) + L-serine + ATP = L-seryl-tRNA(Ser) + AMP + diphosphate + H(+). The catalysed reaction is tRNA(Sec) + L-serine + ATP = L-seryl-tRNA(Sec) + AMP + diphosphate + H(+). It participates in aminoacyl-tRNA biosynthesis; selenocysteinyl-tRNA(Sec) biosynthesis; L-seryl-tRNA(Sec) from L-serine and tRNA(Sec): step 1/1. Functionally, catalyzes the attachment of serine to tRNA(Ser). Is also able to aminoacylate tRNA(Sec) with serine, to form the misacylated tRNA L-seryl-tRNA(Sec), which will be further converted into selenocysteinyl-tRNA(Sec). This chain is Serine--tRNA ligase, found in Francisella tularensis subsp. tularensis (strain FSC 198).